Here is a 271-residue protein sequence, read N- to C-terminus: Formamidopyrimidine-DNA glycosylase (271 aa).

Pro-2 serves as the catalytic Schiff-base intermediate with DNA. The Proton donor role is filled by Glu-3. Lys-57 serves as the catalytic Proton donor; for beta-elimination activity. DNA contacts are provided by His-90, Arg-109, and Lys-151. Residues 236–270 (HVYGRGGDTCTHCGQLLSEIRLGQRATVFCSICQQ) form an FPG-type zinc finger. Arg-260 (proton donor; for delta-elimination activity) is an active-site residue.

It belongs to the FPG family. In terms of assembly, monomer. It depends on Zn(2+) as a cofactor.

It catalyses the reaction Hydrolysis of DNA containing ring-opened 7-methylguanine residues, releasing 2,6-diamino-4-hydroxy-5-(N-methyl)formamidopyrimidine.. The catalysed reaction is 2'-deoxyribonucleotide-(2'-deoxyribose 5'-phosphate)-2'-deoxyribonucleotide-DNA = a 3'-end 2'-deoxyribonucleotide-(2,3-dehydro-2,3-deoxyribose 5'-phosphate)-DNA + a 5'-end 5'-phospho-2'-deoxyribonucleoside-DNA + H(+). In terms of biological role, involved in base excision repair of DNA damaged by oxidation or by mutagenic agents. Acts as a DNA glycosylase that recognizes and removes damaged bases. Has a preference for oxidized purines, such as 7,8-dihydro-8-oxoguanine (8-oxoG). Has AP (apurinic/apyrimidinic) lyase activity and introduces nicks in the DNA strand. Cleaves the DNA backbone by beta-delta elimination to generate a single-strand break at the site of the removed base with both 3'- and 5'-phosphates. The sequence is that of Formamidopyrimidine-DNA glycosylase from Shewanella piezotolerans (strain WP3 / JCM 13877).